A 328-amino-acid chain; its full sequence is tRNA dimethylallyltransferase (328 aa).

25-32 (GNTGSGKS) lines the ATP pocket. Residue 27–32 (TGSGKS) coordinates substrate. The tract at residues 50–53 (DSRQ) is interaction with substrate tRNA.

The protein belongs to the IPP transferase family. As to quaternary structure, monomer. The cofactor is Mg(2+).

It carries out the reaction adenosine(37) in tRNA + dimethylallyl diphosphate = N(6)-dimethylallyladenosine(37) in tRNA + diphosphate. Its function is as follows. Catalyzes the transfer of a dimethylallyl group onto the adenine at position 37 in tRNAs that read codons beginning with uridine, leading to the formation of N6-(dimethylallyl)adenosine (i(6)A). In Dehalococcoides mccartyi (strain ATCC BAA-2100 / JCM 16839 / KCTC 5957 / BAV1), this protein is tRNA dimethylallyltransferase.